Consider the following 210-residue polypeptide: MNPASPFATLTDRIDWQKVDGLVPAIVQDFQSSQVLMMGYMNPEALQKTLDTQQVTFFSRSKQRLWTKGETSGHVLQLKNIALDCDQDTLLVKVNPIGPTCHTGTVTCWDGDAQEESQMVWLHQLEQLLAERKNADPSSSYTASLYARGTKRIAQKVGEEGVEVALAATAGDKEELICESADLMYHLLVLLQEQGLAMNDVINKLKERHK.

The segment at 1–121 (MNPASPFATL…DAQEESQMVW (121 aa)) is phosphoribosyl-AMP cyclohydrolase. Residues 122–210 (LHQLEQLLAE…VINKLKERHK (89 aa)) are phosphoribosyl-ATP pyrophosphohydrolase.

In the N-terminal section; belongs to the PRA-CH family. This sequence in the C-terminal section; belongs to the PRA-PH family.

Its subcellular location is the cytoplasm. The catalysed reaction is 1-(5-phospho-beta-D-ribosyl)-ATP + H2O = 1-(5-phospho-beta-D-ribosyl)-5'-AMP + diphosphate + H(+). The enzyme catalyses 1-(5-phospho-beta-D-ribosyl)-5'-AMP + H2O = 1-(5-phospho-beta-D-ribosyl)-5-[(5-phospho-beta-D-ribosylamino)methylideneamino]imidazole-4-carboxamide. The protein operates within amino-acid biosynthesis; L-histidine biosynthesis; L-histidine from 5-phospho-alpha-D-ribose 1-diphosphate: step 2/9. It participates in amino-acid biosynthesis; L-histidine biosynthesis; L-histidine from 5-phospho-alpha-D-ribose 1-diphosphate: step 3/9. This is Histidine biosynthesis bifunctional protein HisIE (hisI) from Vibrio cholerae serotype O1 (strain ATCC 39315 / El Tor Inaba N16961).